The sequence spans 446 residues: Phosphoglucosamine mutase (446 aa).

The active-site Phosphoserine intermediate is Ser103. Mg(2+) contacts are provided by Ser103, Asp242, Asp244, and Asp246. A Phosphoserine modification is found at Ser103.

It belongs to the phosphohexose mutase family. It depends on Mg(2+) as a cofactor. In terms of processing, activated by phosphorylation.

It carries out the reaction alpha-D-glucosamine 1-phosphate = D-glucosamine 6-phosphate. Functionally, catalyzes the conversion of glucosamine-6-phosphate to glucosamine-1-phosphate. In Vibrio vulnificus (strain YJ016), this protein is Phosphoglucosamine mutase.